Reading from the N-terminus, the 514-residue chain is Beta-glucosidase 16 (514 aa).

Residues 1–21 (MRGKFLSLLLLITLACIGVSA) form the signal peptide. Glutamine 49 contributes to the a beta-D-glucoside binding site. An N-linked (GlcNAc...) asparagine glycan is attached at asparagine 80. Residues histidine 153 and 198–199 (NE) each bind a beta-D-glucoside. The active-site Proton donor is glutamate 199. Cysteine 218 and cysteine 226 form a disulfide bridge. Residue tyrosine 343 coordinates a beta-D-glucoside. Asparagine 357 carries an N-linked (GlcNAc...) asparagine glycan. A beta-D-glucoside is bound by residues glutamate 413, tryptophan 458, 465–466 (EW), and phenylalanine 474. Glutamate 413 functions as the Nucleophile in the catalytic mechanism.

It belongs to the glycosyl hydrolase 1 family. In terms of tissue distribution, expressed at low levels in cauline leaves and flowers.

The enzyme catalyses Hydrolysis of terminal, non-reducing beta-D-glucosyl residues with release of beta-D-glucose.. The protein is Beta-glucosidase 16 of Arabidopsis thaliana (Mouse-ear cress).